The sequence spans 89 residues: Small ribosomal subunit protein bS20 (89 aa).

Basic residues predominate over residues 1-12 (MANIKSAKKRVK). Residues 1–20 (MANIKSAKKRVKQTVVRNER) form a disordered region.

The protein belongs to the bacterial ribosomal protein bS20 family.

In terms of biological role, binds directly to 16S ribosomal RNA. The polypeptide is Small ribosomal subunit protein bS20 (Xylella fastidiosa (strain 9a5c)).